Consider the following 349-residue polypeptide: tRNA pseudouridine synthase D (349 aa).

Residue phenylalanine 27 coordinates substrate. Aspartate 80 (nucleophile) is an active-site residue. Position 129 (asparagine 129) interacts with substrate. The TRUD domain maps to 155-303; it reads GVPNYFGAQR…VEAARRAMLL (149 aa). Phenylalanine 329 serves as a coordination point for substrate.

This sequence belongs to the pseudouridine synthase TruD family.

The enzyme catalyses uridine(13) in tRNA = pseudouridine(13) in tRNA. Its function is as follows. Responsible for synthesis of pseudouridine from uracil-13 in transfer RNAs. The chain is tRNA pseudouridine synthase D from Klebsiella pneumoniae (strain 342).